The chain runs to 475 residues: Ribulose bisphosphate carboxylase large chain (475 aa).

The propeptide occupies 1–2 (MS). Residue Pro-3 is modified to N-acetylproline. Residue Lys-14 is modified to N6,N6,N6-trimethyllysine. Residues Asn-123 and Thr-173 each contribute to the substrate site. Residue Lys-175 is the Proton acceptor of the active site. Lys-177 is a binding site for substrate. Mg(2+) is bound by residues Lys-201, Asp-203, and Glu-204. At Lys-201 the chain carries N6-carboxylysine. Catalysis depends on His-294, which acts as the Proton acceptor. Substrate-binding residues include Arg-295, His-327, and Ser-379.

This sequence belongs to the RuBisCO large chain family. Type I subfamily. As to quaternary structure, heterohexadecamer of 8 large chains and 8 small chains; disulfide-linked. The disulfide link is formed within the large subunit homodimers. The cofactor is Mg(2+). The disulfide bond which can form in the large chain dimeric partners within the hexadecamer appears to be associated with oxidative stress and protein turnover.

It is found in the plastid. The protein localises to the chloroplast. It carries out the reaction 2 (2R)-3-phosphoglycerate + 2 H(+) = D-ribulose 1,5-bisphosphate + CO2 + H2O. The enzyme catalyses D-ribulose 1,5-bisphosphate + O2 = 2-phosphoglycolate + (2R)-3-phosphoglycerate + 2 H(+). Functionally, ruBisCO catalyzes two reactions: the carboxylation of D-ribulose 1,5-bisphosphate, the primary event in carbon dioxide fixation, as well as the oxidative fragmentation of the pentose substrate in the photorespiration process. Both reactions occur simultaneously and in competition at the same active site. The chain is Ribulose bisphosphate carboxylase large chain from Corylus cornuta (Beaked hazel).